The primary structure comprises 349 residues: Fe(3+) ions import ATP-binding protein FbpC (349 aa).

Residues 4–236 (LELHHIGKSY…PVDEPTATFL (233 aa)) enclose the ABC transporter domain. 36 to 43 (GPSGSGKT) contributes to the ATP binding site.

The protein belongs to the ABC transporter superfamily. Fe(3+) ion importer (TC 3.A.1.10) family. As to quaternary structure, the complex is composed of two ATP-binding proteins (FbpC), two transmembrane proteins (FbpB) and a solute-binding protein (FbpA).

It is found in the cell inner membrane. It catalyses the reaction Fe(3+)(out) + ATP + H2O = Fe(3+)(in) + ADP + phosphate + H(+). Functionally, part of the ABC transporter complex FbpABC involved in Fe(3+) ions import. Responsible for energy coupling to the transport system. This is Fe(3+) ions import ATP-binding protein FbpC from Yersinia pseudotuberculosis serotype I (strain IP32953).